Reading from the N-terminus, the 232-residue chain is Orotidine 5'-phosphate decarboxylase (232 aa).

Substrate-binding positions include D11, K33, 60-69 (DLKFHDIPNT), T120, R181, Q190, G210, and R211. K62 (proton donor) is an active-site residue.

The protein belongs to the OMP decarboxylase family. Type 1 subfamily. In terms of assembly, homodimer.

The enzyme catalyses orotidine 5'-phosphate + H(+) = UMP + CO2. Its pathway is pyrimidine metabolism; UMP biosynthesis via de novo pathway; UMP from orotate: step 2/2. Functionally, catalyzes the decarboxylation of orotidine 5'-monophosphate (OMP) to uridine 5'-monophosphate (UMP). In Vibrio vulnificus (strain CMCP6), this protein is Orotidine 5'-phosphate decarboxylase.